A 615-amino-acid chain; its full sequence is TORTIFOLIA1-like protein 3 (615 aa).

HEAT repeat units follow at residues 44-81 (GNLQSFISVILSVDTGDKPAVRKHCIHLLAVLSVSLPL), 86-123 (PFLSKILTRITRRLRDPDSSIRSTCVAAVSAISSRTTK), 125-163 (PFYSAFMKPLADTLFTEQEVNAQIGAALCLAAAIDSASD), 168-205 (RLGQTLLPRLEKLVKCNAFKAKSAGVVVIGSVIGAGGL), and 213-250 (GGLKGLVDCLLSFLVSEDWAARKAAAEALGRLATMERN). The tract at residues 288–446 (VPDLSEEVSP…HHVLSENPNS (159 aa)) is disordered. Residues 318–347 (RVGSTPAKSRTHLVNRSTPPGSSLATTARK) are compositionally biased toward polar residues. The span at 391-406 (DEQHCDHDENAKETSH) shows a compositional bias: basic and acidic residues. Polar residues predominate over residues 407 to 426 (SSHNTVQKLGGVSSSLNGNI). Phosphoserine is present on Ser-456.

This chain is TORTIFOLIA1-like protein 3, found in Arabidopsis thaliana (Mouse-ear cress).